The chain runs to 193 residues: Orotate phosphoribosyltransferase (193 aa).

Residue 114-122 participates in 5-phospho-alpha-D-ribose 1-diphosphate binding; sequence EDVITTGGS. Orotate is bound by residues T118 and R146.

It belongs to the purine/pyrimidine phosphoribosyltransferase family. PyrE subfamily. In terms of assembly, homodimer. Requires Mg(2+) as cofactor.

The catalysed reaction is orotidine 5'-phosphate + diphosphate = orotate + 5-phospho-alpha-D-ribose 1-diphosphate. The protein operates within pyrimidine metabolism; UMP biosynthesis via de novo pathway; UMP from orotate: step 1/2. Catalyzes the transfer of a ribosyl phosphate group from 5-phosphoribose 1-diphosphate to orotate, leading to the formation of orotidine monophosphate (OMP). The sequence is that of Orotate phosphoribosyltransferase from Chlorobium phaeobacteroides (strain DSM 266 / SMG 266 / 2430).